Consider the following 354-residue polypeptide: Replication factor C subunit 5 (354 aa).

Tyr-40 to Lys-47 contributes to the ATP binding site.

Belongs to the activator 1 small subunits family. As to quaternary structure, heterotetramer of subunits RFC2, RFC3, RFC4 and RFC5 that can form a complex with RFC1. In terms of tissue distribution, expressed in roots, leaves, shoot apical meristem (SAM), flag leaves and panicles.

It is found in the nucleus. Its function is as follows. May be involved in DNA replication and thus regulate cell proliferation. The chain is Replication factor C subunit 5 (RFC5) from Oryza sativa subsp. japonica (Rice).